The primary structure comprises 127 residues: Large ribosomal subunit protein bL12 (127 aa).

Positions 93-127 (LVDEAPNPVSEGVSREEADDLKAQIEDAGGEVELQ) are disordered. The span at 105–117 (VSREEADDLKAQI) shows a compositional bias: basic and acidic residues.

Belongs to the bacterial ribosomal protein bL12 family. In terms of assembly, homodimer. Part of the ribosomal stalk of the 50S ribosomal subunit. Forms a multimeric L10(L12)X complex, where L10 forms an elongated spine to which 2 to 4 L12 dimers bind in a sequential fashion. Binds GTP-bound translation factors.

In terms of biological role, forms part of the ribosomal stalk which helps the ribosome interact with GTP-bound translation factors. Is thus essential for accurate translation. The polypeptide is Large ribosomal subunit protein bL12 (Salinibacter ruber (strain DSM 13855 / M31)).